A 485-amino-acid chain; its full sequence is NADH-quinone oxidoreductase subunit N (485 aa).

The next 14 membrane-spanning stretches (helical) occupy residues 8–28, 35–55, 71–91, 105–125, 127–147, 159–179, 203–223, 235–255, 271–291, 297–317, 326–346, 373–393, 408–430, and 455–475; these read LIALLPLLIVGLTVVVVMLSI, FLNATLSVIGLNAALVSLWFV, GFAMLYTGLVQVASLATCTFA, FYLLVLIASLGGILLANANHL, ALFLGIELISLPLFGLIGYAF, YTILSAAASSFLLFGMALVYA, LLAGFGLMIVGLGFKLSLVPF, PAPVSTFLATASKIAIFGVVM, VVLGIIAFASIIFGNLMALSQ, LLGYSSISHLGYLLVALIALQ, VGVYLAGYLFSSLGAFGVVSL, AAVMTVMMLSLAGIPMTLGFI, WWLVAAVVVGSAIGLYYYLRVAV, and IVVLISALLVLVLGVWPQPLI.

Belongs to the complex I subunit 2 family. NDH-1 is composed of 13 different subunits. Subunits NuoA, H, J, K, L, M, N constitute the membrane sector of the complex.

It localises to the cell inner membrane. The enzyme catalyses a quinone + NADH + 5 H(+)(in) = a quinol + NAD(+) + 4 H(+)(out). Its function is as follows. NDH-1 shuttles electrons from NADH, via FMN and iron-sulfur (Fe-S) centers, to quinones in the respiratory chain. The immediate electron acceptor for the enzyme in this species is believed to be ubiquinone. Couples the redox reaction to proton translocation (for every two electrons transferred, four hydrogen ions are translocated across the cytoplasmic membrane), and thus conserves the redox energy in a proton gradient. This chain is NADH-quinone oxidoreductase subunit N, found in Salmonella gallinarum (strain 287/91 / NCTC 13346).